Consider the following 335-residue polypeptide: 2-acylglycerol O-acyltransferase 1 (335 aa).

2 consecutive transmembrane segments (helical) span residues W24–L44 and Y104–T124. A glycan (N-linked (GlcNAc...) asparagine) is linked at N180.

This sequence belongs to the diacylglycerol acyltransferase family. In terms of tissue distribution, expressed at high level in kidney and stomach. Expressed at lower level in brown and white adipose tissue, uterus and liver. Not detected in small intestine.

The protein localises to the endoplasmic reticulum membrane. It carries out the reaction a 2-acylglycerol + an acyl-CoA = a 1,2-diacylglycerol + CoA. The enzyme catalyses 2-(9Z-octadecenoyl)-glycerol + butanoyl-CoA = 1-butanoyl-2-(9Z-octadecenoyl)-glycerol + CoA. It catalyses the reaction 2-(9Z-octadecenoyl)-glycerol + octanoyl-CoA = 1-octanoyl-2-(9Z-octadecenoyl)-glycerol + CoA. The catalysed reaction is 2-(9Z-octadecenoyl)-glycerol + dodecanoyl-CoA = 1-dodecanoyl-2-(9Z-octadecenoyl)-glycerol + CoA. It carries out the reaction 2-(9Z-octadecenoyl)-glycerol + tetradecanoyl-CoA = 1-tetradecanoyl-2-(9Z-octadecenoyl)-glycerol + CoA. The enzyme catalyses 2-(9Z-octadecenoyl)-glycerol + hexadecanoyl-CoA = 1-hexadecanoyl-2-(9Z-octadecenoyl)-glycerol + CoA. It catalyses the reaction 2-(9Z-octadecenoyl)-glycerol + octadecanoyl-CoA = 1-octadecanoyl-2-(9Z-octadecenoyl)-glycerol + CoA. The catalysed reaction is eicosanoyl-CoA + 2-(9Z-octadecenoyl)-glycerol = 1-eicosanoyl-2-(9Z-octadecenoyl)-glycerol + CoA. It carries out the reaction 2-(9Z-octadecenoyl)-glycerol + (9Z)-octadecenoyl-CoA = 1,2-di-(9Z-octadecenoyl)-glycerol + CoA. The enzyme catalyses 2-(9Z-octadecenoyl)-glycerol + (9Z,12Z)-octadecadienoyl-CoA = 1-(9Z,12Z-octadecadienoyl)-2-(9Z-octadecenoyl)-glycerol + CoA. It catalyses the reaction 2-(9Z-octadecenoyl)-glycerol + (5Z,8Z,11Z,14Z)-eicosatetraenoyl-CoA = 1-(5Z,8Z,11Z,14Z-eicosatetraenoyl)-2-(9Z-octadecenoyl)-glycerol + CoA. The catalysed reaction is a 2-acylglycerol + an acyl-CoA = a 1,2-diacyl-sn-glycerol + CoA. It carries out the reaction a 2-acylglycerol + an acyl-CoA = a 2,3-diacyl-sn-glycerol + CoA. The enzyme catalyses a 1-acylglycerol + an acyl-CoA = a 1,2-diacylglycerol + CoA. It catalyses the reaction 1-dodecanoylglycerol + (9Z)-octadecenoyl-CoA = 1-dodecanoyl-2-(9Z-octadecenoyl)-glycerol + CoA. The catalysed reaction is 1-tetradecanoylglycerol + (9Z)-octadecenoyl-CoA = 1-tetradecanoyl-2-(9Z-octadecenoyl)-glycerol + CoA. It carries out the reaction 1-hexadecanoylglycerol + (9Z)-octadecenoyl-CoA = 1-hexadecanoyl-2-(9Z-octadecenoyl)-glycerol + CoA. The enzyme catalyses 1-(9Z-octadecenoyl)-glycerol + (9Z)-octadecenoyl-CoA = 1,2-di-(9Z-octadecenoyl)-glycerol + CoA. It catalyses the reaction 1-(9Z,12Z-octadecadienoyl)-glycerol + (9Z)-octadecenoyl-CoA = 1-(9Z,12Z-octadecadienoyl)-2-(9Z-octadecenoyl)-glycerol + CoA. The catalysed reaction is 1-(9Z,12Z,15Z-octadecatrienoyl)-glycerol + (9Z)-octadecenoyl-CoA = 1-(9Z,12Z,15Z-octadecatrienoyl)-2-(9Z-octadecenoyl)-glycerol + CoA. It carries out the reaction 1-(5Z,8Z,11Z,14Z-eicosatetraenoyl)-glycerol + (9Z)-octadecenoyl-CoA = 1-(5Z,8Z,11Z,14Z-eicosatetraenoyl)-2-(9Z-octadecenoyl)-glycerol + CoA. The enzyme catalyses a 1-acylglycerol + an acyl-CoA = a 1,3-diacylglycerol + CoA. It catalyses the reaction 1-dodecanoylglycerol + (9Z)-octadecenoyl-CoA = 1-dodecanoyl-3-(9Z-octadecenoyl)-glycerol + CoA. The catalysed reaction is 1-hexadecanoylglycerol + (9Z)-octadecenoyl-CoA = 1-(9Z-octadecenoyl)-3-hexadecanoylglycerol + CoA. It carries out the reaction 1-octadecanoylglycerol + (9Z)-octadecenoyl-CoA = 1-octadecanoyl-3-(9Z-octadecenoyl)-glycerol + CoA. The enzyme catalyses 1-(9Z-octadecenoyl)-sn-glycerol + (9Z)-octadecenoyl-CoA = 1,3-di-(9Z-octadecenoyl)-glycerol + CoA. It catalyses the reaction 1-(9Z,12Z-octadecadienoyl)-glycerol + (9Z)-octadecenoyl-CoA = 1-(9Z-octadecenoyl)-3-(9Z,12Z-octadecadienoyl)-glycerol + CoA. The catalysed reaction is 1-(9Z,12Z,15Z-octadecatrienoyl)-glycerol + (9Z)-octadecenoyl-CoA = 1-(9Z,12Z,15Z-octadecatrienoyl)-3-(9Z-octadecenoyl)-glycerol + CoA. It carries out the reaction a 1-acyl-sn-glycerol + an acyl-CoA = a 1,3-diacyl-sn-glycerol + CoA. The enzyme catalyses a 3-acyl-sn-glycerol + an acyl-CoA = a 1,3-diacyl-sn-glycerol + CoA. It catalyses the reaction 3-octadecanoyl-sn-glycerol + (9Z)-octadecenoyl-CoA = 1-(9Z-octadecenoyl)-3-octadecanoyl-sn-glycerol + CoA. It participates in glycerolipid metabolism; triacylglycerol biosynthesis. Involved in glycerolipid synthesis and lipid metabolism. Catalyzes the formation of diacylglycerol, the precursor of triacylglycerol, by transferring the acyl chain of a fatty acyl-CoA to a monoacylglycerol, mainly at the sn-1 or sn-3 positions. It uses both sn-2-monoacylglycerol (2-acylglycerol) and sn-1-monoacylglycerol (1-acyl-sn-glycerol) equally well as substrates, and uses sn-3-monoacylglycerol (3-acyl-sn-glycerol) with lower efficiency. Probably not involved in absorption of dietary fat in the small intestine. In Mus musculus (Mouse), this protein is 2-acylglycerol O-acyltransferase 1.